We begin with the raw amino-acid sequence, 204 residues long: ATP-dependent Clp protease proteolytic subunit (204 aa).

Catalysis depends on serine 102, which acts as the Nucleophile. Histidine 127 is an active-site residue.

It belongs to the peptidase S14 family. As to quaternary structure, fourteen ClpP subunits assemble into 2 heptameric rings which stack back to back to give a disk-like structure with a central cavity, resembling the structure of eukaryotic proteasomes.

The protein resides in the cytoplasm. The catalysed reaction is Hydrolysis of proteins to small peptides in the presence of ATP and magnesium. alpha-casein is the usual test substrate. In the absence of ATP, only oligopeptides shorter than five residues are hydrolyzed (such as succinyl-Leu-Tyr-|-NHMec, and Leu-Tyr-Leu-|-Tyr-Trp, in which cleavage of the -Tyr-|-Leu- and -Tyr-|-Trp bonds also occurs).. Functionally, cleaves peptides in various proteins in a process that requires ATP hydrolysis. Has a chymotrypsin-like activity. Plays a major role in the degradation of misfolded proteins. The protein is ATP-dependent Clp protease proteolytic subunit of Neisseria meningitidis serogroup C (strain 053442).